A 473-amino-acid chain; its full sequence is ATP synthase subunit beta 2 (473 aa).

158-165 (GGAGVGKT) serves as a coordination point for ATP.

Belongs to the ATPase alpha/beta chains family. As to quaternary structure, F-type ATPases have 2 components, CF(1) - the catalytic core - and CF(0) - the membrane proton channel. CF(1) has five subunits: alpha(3), beta(3), gamma(1), delta(1), epsilon(1). CF(0) has three main subunits: a(1), b(2) and c(9-12). The alpha and beta chains form an alternating ring which encloses part of the gamma chain. CF(1) is attached to CF(0) by a central stalk formed by the gamma and epsilon chains, while a peripheral stalk is formed by the delta and b chains.

It is found in the cell membrane. It carries out the reaction ATP + H2O + 4 H(+)(in) = ADP + phosphate + 5 H(+)(out). Its function is as follows. Produces ATP from ADP in the presence of a proton gradient across the membrane. The catalytic sites are hosted primarily by the beta subunits. The protein is ATP synthase subunit beta 2 of Listeria monocytogenes serotype 4b (strain F2365).